Consider the following 217-residue polypeptide: Urease accessory protein UreG (217 aa).

13-20 (GPVGSGKT) contacts GTP.

It belongs to the SIMIBI class G3E GTPase family. UreG subfamily. In terms of assembly, homodimer. UreD, UreF and UreG form a complex that acts as a GTP-hydrolysis-dependent molecular chaperone, activating the urease apoprotein by helping to assemble the nickel containing metallocenter of UreC. The UreE protein probably delivers the nickel.

It localises to the cytoplasm. In terms of biological role, facilitates the functional incorporation of the urease nickel metallocenter. This process requires GTP hydrolysis, probably effectuated by UreG. This Frankia alni (strain DSM 45986 / CECT 9034 / ACN14a) protein is Urease accessory protein UreG.